A 106-amino-acid polypeptide reads, in one-letter code: Transcription factor TRY (106 aa).

Positions 34 to 71 constitute a Myb-like domain; that stretch reads TEQEEDLIFRMYRLVGDRWDLIAGRVPGRQPEEIERYW. A disordered region spans residues 83–106; sequence RRQLHSSSHKHTKPHRPRFSIYPS. Residues 84–100 are compositionally biased toward basic residues; the sequence is RQLHSSSHKHTKPHRPR.

Interacts with GL3 and thus prevents GL1 GL3 interaction. Also interacts with BHLH2. Expressed in roots, leaves, siliques and inflorescences.

It is found in the nucleus. Functionally, transcription factor. Involved in epidermal cell fate specification. Negative regulator of trichome development, including endoreplication, by lateral inhibition involving intercellular interactions. Promotes the formation of hair developing cells (trichoblasts) in H position in root epidermis, probably by inhibiting non-hair cell (atrichoblasts) formation. The chain is Transcription factor TRY (TRY) from Arabidopsis thaliana (Mouse-ear cress).